A 278-amino-acid polypeptide reads, in one-letter code: DegV domain-containing protein YejH (278 aa).

Residues 3-277 enclose the DegV domain; that stretch reads IKIVTDSSIT…PGAWAIMIDY (275 aa). Hexadecanoate contacts are provided by threonine 60 and serine 92.

May bind long-chain fatty acids, such as palmitate, and may play a role in lipid transport or fatty acid metabolism. This chain is DegV domain-containing protein YejH (yejH), found in Lactococcus lactis subsp. lactis (strain IL1403) (Streptococcus lactis).